Reading from the N-terminus, the 306-residue chain is Non-specific ribonucleoside hydrolase RihC (306 aa).

His-235 is a catalytic residue.

Belongs to the IUNH family. RihC subfamily.

In terms of biological role, hydrolyzes both purine and pyrimidine ribonucleosides with a broad-substrate specificity. In Salmonella enteritidis PT4 (strain P125109), this protein is Non-specific ribonucleoside hydrolase RihC.